The sequence spans 1482 residues: Lysine-specific demethylase rbr-2 (1482 aa).

Residues methionine 1–methionine 45 form a disordered region. Positions threonine 11–threonine 20 are enriched in low complexity. Over residues asparagine 30–proline 41 the composition is skewed to polar residues. The JmjN domain maps to alanine 61–proline 102. Residues valine 126–lysine 223 form the ARID domain. The tract at residues tyrosine 244 to asparagine 316 is disordered. Residues methionine 251 to glutamate 264 show a composition bias toward basic and acidic residues. Basic residues predominate over residues glycine 277 to proline 288. The PHD-type 1 zinc finger occupies glutamine 322–serine 374. The JmjC domain maps to glutamine 471 to serine 637. Residues histidine 517, aspartate 520, and histidine 605 each coordinate Fe cation. The segment at leucine 1206–glycine 1260 adopts a PHD-type 2 zinc-finger fold. Positions glutamine 1361–glutamine 1403 are disordered. A PHD-type 3 zinc finger spans residues phenylalanine 1416–histidine 1471.

It belongs to the JARID1 histone demethylase family. It depends on Fe(2+) as a cofactor.

It is found in the nucleus. It catalyses the reaction N(6),N(6),N(6)-trimethyl-L-lysyl(4)-[histone H3] + 3 2-oxoglutarate + 3 O2 = L-lysyl(4)-[histone H3] + 3 formaldehyde + 3 succinate + 3 CO2. In terms of biological role, histone demethylase that specifically demethylates 'Lys-4' of histone H3, thereby playing a central role in histone code. Does not demethylate histone H3 'Lys-9', H3 'Lys-27', H3 'Lys-36', H3 'Lys-79' or H4 'Lys-20'. Demethylates trimethylated and dimethylated but not monomethylated H3 'Lys-4'. Involved in larval development and vulva formation. The polypeptide is Lysine-specific demethylase rbr-2 (rbr-2) (Caenorhabditis briggsae).